A 163-amino-acid polypeptide reads, in one-letter code: Xanthine-guanine phosphoribosyltransferase (163 aa).

5-phospho-alpha-D-ribose 1-diphosphate-binding positions include 43–44 (RG) and 95–103 (DDLVDTGGT). Mg(2+) is bound at residue aspartate 96. Guanine contacts are provided by aspartate 99 and isoleucine 142. Residues aspartate 99 and isoleucine 142 each contribute to the xanthine site. GMP-binding positions include 99 to 103 (DTGGT) and 141 to 142 (WI).

The protein belongs to the purine/pyrimidine phosphoribosyltransferase family. XGPT subfamily. In terms of assembly, homotetramer. Mg(2+) is required as a cofactor.

The protein resides in the cell inner membrane. The catalysed reaction is GMP + diphosphate = guanine + 5-phospho-alpha-D-ribose 1-diphosphate. It carries out the reaction XMP + diphosphate = xanthine + 5-phospho-alpha-D-ribose 1-diphosphate. It catalyses the reaction IMP + diphosphate = hypoxanthine + 5-phospho-alpha-D-ribose 1-diphosphate. The protein operates within purine metabolism; GMP biosynthesis via salvage pathway; GMP from guanine: step 1/1. Its pathway is purine metabolism; XMP biosynthesis via salvage pathway; XMP from xanthine: step 1/1. In terms of biological role, purine salvage pathway enzyme that catalyzes the transfer of the ribosyl-5-phosphate group from 5-phospho-alpha-D-ribose 1-diphosphate (PRPP) to the N9 position of the 6-oxopurines guanine and xanthine to form the corresponding ribonucleotides GMP (guanosine 5'-monophosphate) and XMP (xanthosine 5'-monophosphate), with the release of PPi. To a lesser extent, also acts on hypoxanthine. The sequence is that of Xanthine-guanine phosphoribosyltransferase from Nitratidesulfovibrio vulgaris (strain DP4) (Desulfovibrio vulgaris).